The following is a 994-amino-acid chain: Tyrosine-protein kinase Mer (994 aa).

The N-terminal stretch at methionine 1–serine 18 is a signal peptide. The Extracellular portion of the chain corresponds to glycine 19–methionine 497. The disordered stretch occupies residues valine 44–threonine 78. 2 consecutive Ig-like C2-type domains span residues proline 75–serine 181 and proline 192–serine 268. 15 N-linked (GlcNAc...) asparagine glycosylation sites follow: asparagine 91, asparagine 108, asparagine 165, asparagine 202, asparagine 210, asparagine 229, asparagine 289, asparagine 311, asparagine 324, asparagine 331, asparagine 349, asparagine 384, asparagine 390, asparagine 437, and asparagine 449. A disulfide bridge connects residues cysteine 109 and cysteine 170. The cysteines at positions 213 and 257 are disulfide-linked. Fibronectin type-III domains follow at residues proline 281–glycine 376 and alanine 381–histidine 478. Residues phenylalanine 498–leucine 518 traverse the membrane as a helical segment. The Cytoplasmic portion of the chain corresponds to alanine 519–methionine 994. Serine 538 is subject to Phosphoserine. Residues leucine 582–leucine 852 enclose the Protein kinase domain. ATP is bound by residues leucine 588–valine 596 and lysine 610. Aspartate 718 functions as the Proton acceptor in the catalytic mechanism. Phosphotyrosine; by autocatalysis occurs at positions 744, 748, 749, and 867.

The protein belongs to the protein kinase superfamily. Tyr protein kinase family. AXL/UFO subfamily. Interacts (upon activation) with TNK2; stimulates TNK2 autophosphorylation. Interacts (via N-terminus) with extracellular ligands LGALS3, TUB, TULP1 and GAS6. Interacts with VAV1 in a phosphotyrosine-independent manner. Interacts with TIMD4; this interaction enhances TIMD4-mediated efferocytosis. Post-translationally, autophosphorylated on Tyr-744, Tyr-748 and Tyr-749 in the activation loop allowing full activity. Autophosphorylated on Tyr-867 leading to recruitment of downstream partners of the signaling cascade such as PLCG2. Expressed predominantly in the hematopoietic lineages: macrophages, NK cells, NKT cells, dendritic cells and platelets.

The protein localises to the cell membrane. The catalysed reaction is L-tyrosyl-[protein] + ATP = O-phospho-L-tyrosyl-[protein] + ADP + H(+). In terms of biological role, receptor tyrosine kinase that transduces signals from the extracellular matrix into the cytoplasm by binding to several ligands including LGALS3, TUB, TULP1 or GAS6. Regulates many physiological processes including cell survival, migration, differentiation, and phagocytosis of apoptotic cells (efferocytosis). Ligand binding at the cell surface induces autophosphorylation of MERTK on its intracellular domain that provides docking sites for downstream signaling molecules. Following activation by ligand, interacts with GRB2 or PLCG2 and induces phosphorylation of MAPK1, MAPK2, FAK/PTK2 or RAC1. MERTK signaling plays a role in various processes such as macrophage clearance of apoptotic cells, platelet aggregation, cytoskeleton reorganization and engulfment. Functions in the retinal pigment epithelium (RPE) as a regulator of rod outer segments fragments phagocytosis. Also plays an important role in inhibition of Toll-like receptors (TLRs)-mediated innate immune response by activating STAT1, which selectively induces production of suppressors of cytokine signaling SOCS1 and SOCS3. The chain is Tyrosine-protein kinase Mer (Mertk) from Mus musculus (Mouse).